Here is a 338-residue protein sequence, read N- to C-terminus: Holliday junction branch migration complex subunit RuvB (338 aa).

Residues 1–181 (MERAITPEKR…FGVISRLEFY (181 aa)) are large ATPase domain (RuvB-L). ATP contacts are provided by residues leucine 20, arginine 21, glycine 62, lysine 65, threonine 66, threonine 67, 128–130 (EDF), arginine 171, tyrosine 181, and arginine 218. Threonine 66 contributes to the Mg(2+) binding site. The segment at 182–252 (THDELAFIVT…VVQETLRLLE (71 aa)) is small ATPAse domain (RuvB-S). The tract at residues 255-338 (EMGFDQMDRM…TPERPQGSLF (84 aa)) is head domain (RuvB-H). Positions 310 and 315 each coordinate DNA.

This sequence belongs to the RuvB family. As to quaternary structure, homohexamer. Forms an RuvA(8)-RuvB(12)-Holliday junction (HJ) complex. HJ DNA is sandwiched between 2 RuvA tetramers; dsDNA enters through RuvA and exits via RuvB. An RuvB hexamer assembles on each DNA strand where it exits the tetramer. Each RuvB hexamer is contacted by two RuvA subunits (via domain III) on 2 adjacent RuvB subunits; this complex drives branch migration. In the full resolvosome a probable DNA-RuvA(4)-RuvB(12)-RuvC(2) complex forms which resolves the HJ.

The protein resides in the cytoplasm. The catalysed reaction is ATP + H2O = ADP + phosphate + H(+). Functionally, the RuvA-RuvB-RuvC complex processes Holliday junction (HJ) DNA during genetic recombination and DNA repair, while the RuvA-RuvB complex plays an important role in the rescue of blocked DNA replication forks via replication fork reversal (RFR). RuvA specifically binds to HJ cruciform DNA, conferring on it an open structure. The RuvB hexamer acts as an ATP-dependent pump, pulling dsDNA into and through the RuvAB complex. RuvB forms 2 homohexamers on either side of HJ DNA bound by 1 or 2 RuvA tetramers; 4 subunits per hexamer contact DNA at a time. Coordinated motions by a converter formed by DNA-disengaged RuvB subunits stimulates ATP hydrolysis and nucleotide exchange. Immobilization of the converter enables RuvB to convert the ATP-contained energy into a lever motion, pulling 2 nucleotides of DNA out of the RuvA tetramer per ATP hydrolyzed, thus driving DNA branch migration. The RuvB motors rotate together with the DNA substrate, which together with the progressing nucleotide cycle form the mechanistic basis for DNA recombination by continuous HJ branch migration. Branch migration allows RuvC to scan DNA until it finds its consensus sequence, where it cleaves and resolves cruciform DNA. In Trichlorobacter lovleyi (strain ATCC BAA-1151 / DSM 17278 / SZ) (Geobacter lovleyi), this protein is Holliday junction branch migration complex subunit RuvB.